A 201-amino-acid chain; its full sequence is Recombination protein RecR (201 aa).

A C4-type zinc finger spans residues Cys-57–Cys-72. The 96-residue stretch at Gly-81–Pro-176 folds into the Toprim domain.

The protein belongs to the RecR family.

In terms of biological role, may play a role in DNA repair. It seems to be involved in an RecBC-independent recombinational process of DNA repair. It may act with RecF and RecO. The sequence is that of Recombination protein RecR from Actinobacillus pleuropneumoniae serotype 5b (strain L20).